We begin with the raw amino-acid sequence, 1280 residues long: SET and MYND domain-containing protein DDB_G0284059 (1280 aa).

Disordered stretches follow at residues 1–35 and 111–167; these read MTKK…SHNH and INKI…QKQQ. Low complexity-rich tracts occupy residues 16-25 and 117-153; these read NNNNNNNHGN and ENSP…QSQP. TPR repeat units follow at residues 272–305 and 383–416; these read SKGY…YDME and HKLY…IEKR. A coiled-coil region spans residues 439-468; that stretch reads QKDEEIEQELDNKNNNSNDDEKQQQQQQQQ. Zn(2+) is bound by residues Cys-533, Cys-536, Cys-546, Cys-549, Cys-555, Cys-559, His-568, and Cys-572. The MYND-type zinc-finger motif lies at 533–572; that stretch reads CYNCFKEILSPIYCKECSNSQYCSNKCLNEDYVKQHGREC. Disordered regions lie at residues 601–642, 659–726, 854–905, and 1039–1079; these read ANKG…QNLN, ALSS…TTTT, QQQQ…PFSP, and AKLQ…LNNN. Composition is skewed to low complexity over residues 659–697, 712–726, 854–898, 1042–1053, and 1061–1079; these read ALSS…SLTE, SSSS…TTTT, QQQQ…QNPP, QQQQQQQQQHQQ, and NSNP…LNNN. The SET domain occupies 822-965; sequence CQLTTYTFAI…KGEEILGCYG (144 aa). The TPR 3 repeat unit spans residues 1218–1251; that stretch reads GREYSKLGQIYLTLGEIEKSEDAIEKAESILMSW.

Belongs to the class V-like SAM-binding methyltransferase superfamily.

Functionally, probable methyltransferase. In Dictyostelium discoideum (Social amoeba), this protein is SET and MYND domain-containing protein DDB_G0284059.